The following is a 540-amino-acid chain: Cytochrome P450 monooxygenase CYP3 (540 aa).

A glycan (N-linked (GlcNAc...) asparagine) is linked at Asn-2. The helical transmembrane segment at 26–46 threads the bilayer; that stretch reads IFGLSSSTLVVLVAMIAVSTL. Asn-100, Asn-210, and Asn-400 each carry an N-linked (GlcNAc...) asparagine glycan. Cys-471 lines the heme pocket.

The protein belongs to the cytochrome P450 family. The cofactor is heme.

It localises to the membrane. It participates in secondary metabolite biosynthesis. In terms of biological role, cytochrome P450 monooxygenase; part of the gene cluster that mediates the biosynthesis of itaconic acid and 2-hydroxyparaconate. Cis-aconitate is secreted by the mitochondrial tricarboxylate transporter MTT1. In the cytosol cis-aconitate is converted into trans-aconitate via isomerization by the aconitate-delta-isomerase ADI1. Decarboxylation of trans-aconitate by the trans-aconitate decarboxylase TAD1 then leads then to the production of itaconic acid. The cytochrome P450 monooxygenase CYP3 further converts itaconate to 2-hydroxyparaconate via oxidation of the double bond, leading to a transient epoxide, which can subsequently be lactonized to produce 2-hydroxyparaconate. Secretion of itaconate and possibly 2-hydroxyparaconate into the medium is mediated by the major facilitator ITP1. The glyoxalase domain-containing protein RDO1 is not involved in the biosynthesis of itaconate and 2-hydroxyparaconate, however, it might play a role in the further conversion of 2-hydroxyparaconate to itatartarate. The sequence is that of Cytochrome P450 monooxygenase CYP3 from Mycosarcoma maydis (Corn smut fungus).